The chain runs to 619 residues: Protein Atg16l2 (619 aa).

The segment at 57–78 (LQPEPNSVTPTTHQGPWEESEL) is disordered. Residues 60–70 (EPNSVTPTTHQ) are compositionally biased toward polar residues. Positions 116-227 (AALGTLESEL…QARVSQELKK (112 aa)) form a coiled coil. 7 WD repeats span residues 334–373 (AHLS…LEAN), 378–417 (GAGG…SKET), 420–454 (GHKD…LGRA), 455–498 (YCSR…CTQV), 500–539 (PVQG…IRQV), 546–585 (KCGS…LESR), and 589–619 (PHCA…VLWQ).

The protein belongs to the WD repeat ATG16 family. In terms of assembly, homooligomer. Heterooligomer with ATG16L1. Interacts with ATG5. Self-oligomerizes to form a 800-kDa complex composed of ATG12-ATG5 and ATG16L2. Interacts with RAB33B.

The protein resides in the cytoplasm. It is found in the cytosol. In terms of biological role, may play a role in regulating epithelial homeostasis in an ATG16L1-dependent manner. The sequence is that of Protein Atg16l2 (ATG16L2) from Homo sapiens (Human).